We begin with the raw amino-acid sequence, 221 residues long: Eukaryotic translation initiation factor 3 subunit K (221 aa).

The 170-residue stretch at 46-215 folds into the PCI domain; that stretch reads YDLEANLACL…EKIEFDNLAP (170 aa).

This sequence belongs to the eIF-3 subunit K family. As to quaternary structure, component of the eukaryotic translation initiation factor 3 (eIF-3) complex.

Its subcellular location is the cytoplasm. Component of the eukaryotic translation initiation factor 3 (eIF-3) complex, which is involved in protein synthesis of a specialized repertoire of mRNAs and, together with other initiation factors, stimulates binding of mRNA and methionyl-tRNAi to the 40S ribosome. The eIF-3 complex specifically targets and initiates translation of a subset of mRNAs involved in cell proliferation. This Anopheles gambiae (African malaria mosquito) protein is Eukaryotic translation initiation factor 3 subunit K.